We begin with the raw amino-acid sequence, 109 residues long: MGDDELAELRRRRMAQLQSQQMDQQQMDEEKQRAKSAMQMALMQILEPEARERLNTIRLTKPEFAAGVEQQLVMLAQSGRIKQKISDAQLKDLLRQLIPAKKDFNIVRK.

Positions 14-35 (MAQLQSQQMDQQQMDEEKQRAK) are disordered. The span at 16–25 (QLQSQQMDQQ) shows a compositional bias: low complexity.

The protein belongs to the PDCD5 family.

The sequence is that of DNA-binding protein Mpal_0536 from Methanosphaerula palustris (strain ATCC BAA-1556 / DSM 19958 / E1-9c).